The sequence spans 125 residues: Dirigent protein 22 (125 aa).

N-linked (GlcNAc...) asparagine glycosylation is found at N8, N30, and N65.

This sequence belongs to the plant dirigent protein family. Homodimer.

The protein resides in the secreted. It localises to the extracellular space. It is found in the apoplast. Dirigent proteins impart stereoselectivity on the phenoxy radical-coupling reaction, yielding optically active lignans from two molecules of coniferyl alcohol in the biosynthesis of lignans, flavonolignans, and alkaloids and thus plays a central role in plant secondary metabolism. The chain is Dirigent protein 22 (DIR22) from Arabidopsis thaliana (Mouse-ear cress).